The chain runs to 751 residues: Glutamate carboxypeptidase 2 (751 aa).

Over 1–19 the chain is Cytoplasmic; that stretch reads MWNPLHETDSTSVAWRRPR. S10 carries the phosphoserine modification. The helical; Signal-anchor for type II membrane protein transmembrane segment at 20–43 threads the bilayer; that stretch reads WLCAGALVLAAGLFVLGFLFGWFI. Residues 44-750 lie on the Extracellular side of the membrane; sequence KSPNEAANIS…QAAAGTLREV (707 aa). Residues N51, N77, N122, N141, N154, and N196 are each glycosylated (N-linked (GlcNAc...) asparagine). R211 and N258 together coordinate substrate. Ca(2+) is bound by residues T270 and Y273. Residues 275–588 form an NAALADase region; that stretch reads ANEYAYRLQI…QVRGGIVFEL (314 aa). N-linked (GlcNAc...) asparagine glycosylation occurs at N337. Zn(2+)-binding residues include H378 and D388. A substrate-binding site is contributed by E425. The active-site Nucleophile; for NAALADase activity is E425. E426 serves as a coordination point for Zn(2+). The Ca(2+) site is built by E434 and E437. D454 serves as a coordination point for Zn(2+). 2 N-linked (GlcNAc...) asparagine glycosylation sites follow: N460 and N477. Substrate is bound by residues 518-519, N520, 535-537, Y553, and 553-554; these read SG, RAR, and YH. H554 contributes to the Zn(2+) binding site. A glycan (N-linked (GlcNAc...) asparagine) is linked at N614. S629 functions as the Charge relay system in the catalytic mechanism. N639 and N646 each carry an N-linked (GlcNAc...) asparagine glycan. Catalysis depends on charge relay system residues D667 and H690. 700–701 provides a ligand contact to substrate; that stretch reads KY.

It belongs to the peptidase M28 family. M28B subfamily. As to quaternary structure, homodimer. Zn(2+) serves as cofactor. In terms of tissue distribution, high expression in the duodenum and in the jejunum brush-border membrane. Weak expression in kidney.

Its subcellular location is the cell membrane. The catalysed reaction is Release of an unsubstituted, C-terminal glutamyl residue, typically from Ac-Asp-Glu or folylpoly-gamma-glutamates.. Its activity is regulated as follows. The NAALADase activity is inhibited by quisqualic acid, beta-NAAG and 2-(phosphonomethyl) pentanedioic acid (PMPA). Ethanol ingestion decreases the folate hydrolase activity by 50%. Has both folate hydrolase and N-acetylated-alpha-linked-acidic dipeptidase (NAALADase) activity. Has a preference for tri-alpha-glutamate peptides. In the intestine, required for the uptake of folate. In the brain, modulates excitatory neurotransmission through the hydrolysis of the neuropeptide, N-aceylaspartylglutamate (NAAG), thereby releasing glutamate. In terms of biological role, also exhibits a dipeptidyl-peptidase IV type activity. In vitro, cleaves Gly-Pro-AMC. This Sus scrofa (Pig) protein is Glutamate carboxypeptidase 2 (FOLH1).